Here is a 464-residue protein sequence, read N- to C-terminus: ATP synthase subunit beta 2 (464 aa).

153–160 (GGAGVGKT) serves as a coordination point for ATP.

This sequence belongs to the ATPase alpha/beta chains family. In terms of assembly, F-type ATPases have 2 components, CF(1) - the catalytic core - and CF(0) - the membrane proton channel. CF(1) has five subunits: alpha(3), beta(3), gamma(1), delta(1), epsilon(1). CF(0) has three main subunits: a(1), b(2) and c(9-12). The alpha and beta chains form an alternating ring which encloses part of the gamma chain. CF(1) is attached to CF(0) by a central stalk formed by the gamma and epsilon chains, while a peripheral stalk is formed by the delta and b chains.

The protein resides in the cell inner membrane. The enzyme catalyses ATP + H2O + 4 H(+)(in) = ADP + phosphate + 5 H(+)(out). Produces ATP from ADP in the presence of a proton gradient across the membrane. The catalytic sites are hosted primarily by the beta subunits. The sequence is that of ATP synthase subunit beta 2 from Paraburkholderia xenovorans (strain LB400).